We begin with the raw amino-acid sequence, 429 residues long: Histidine--tRNA ligase (429 aa).

The protein belongs to the class-II aminoacyl-tRNA synthetase family. As to quaternary structure, homodimer.

Its subcellular location is the cytoplasm. It carries out the reaction tRNA(His) + L-histidine + ATP = L-histidyl-tRNA(His) + AMP + diphosphate + H(+). This chain is Histidine--tRNA ligase, found in Prochlorococcus marinus (strain MIT 9515).